Reading from the N-terminus, the 799-residue chain is MARTAPVEPPLRHPAPPSPAAGEPRASAEAAVAPRRVLFADEALGLPLAQLRRYRPWGGPGAGKMAAATGQDGGGGGADEEDDGEDGDEGEEEEEAFPDPSPPCPVPAGGGFYLVPTFSLPPALGRLERLGRVMVELEALLPPPGAVPGGSGVWVPGGRPPVVRGLVRVLNRSFEKAVHVRASHDGWATFCDHPARYVPRSPPGAGVGGTGAGDPLLDPGLGLGPGQMSASSPDDGGCTDRFAFQLPFAEGASDGARLDFVVRYETPEGTFWANNHGRNYTVLLRIAPAPTPTDAEGLPQQQQLQQLEPQPECQGPVEAEARQLKSCMKPVRRRPFEEEPRMRSADDNTLAEHPDVRESLGPLLAPTPLRPWPQMTLQVPEVMLTSNPQEEGDIPRSNPPVAFTEVRQAPAIRILPATCGLGGPPRDQASGPDASDRAAGSFLEPTQQQVEAAWESGGGRKAPMVGALTDEPARGLEIVSGLDELLGEDTIDQELEQLYLSHLSRLRAVAAAGGGEGTSPTHALGILTDRDLILKWPGPERALNSALAEEITLHYARLGCGVELIKDTEDPDDEGEGEDGLSITPSSPEGGSPKESPPEILSGARSVIATMGDVWVPWAERSSSRCDSPVVLGTQGQFTENPEKGMGKDTKSLHLNRVIVGMSKSPGEAGTESQMEELPTERESSWVPSSEKELPLPVQQEQSPALLGPTGTEVCLSSVAKPHVNSQEEEGGSLNLESPKRSPMPAAPAECACGLAPQLWGPLTQTLGVLAGLVMVPVALNSGVSLLVLVLCLSLAWFS.

The segment at 1 to 30 (MARTAPVEPPLRHPAPPSPAAGEPRASAEA) is disordered. At 1–772 (MARTAPVEPP…LTQTLGVLAG (772 aa)) the chain is on the cytoplasmic side. Residues 7 to 19 (VEPPLRHPAPPSP) show a composition bias toward pro residues. Position 18 is a phosphoserine (S18). Low complexity predominate over residues 20 to 30 (AAGEPRASAEA). The PP1-binding motif motif lies at 36–39 (RVLF). Disordered stretches follow at residues 53–108 (RYRP…PVPA), 201–235 (SPPG…SPDD), 332–353 (RRRP…LAEH), and 417–439 (ATCG…DRAA). Residues 78 to 97 (ADEEDDGEDGDEGEEEEEAF) are compositionally biased toward acidic residues. Residues 127–283 (LERLGRVMVE…NNHGRNYTVL (157 aa)) enclose the CBM21 domain. Basic and acidic residues predominate over residues 334 to 353 (RPFEEEPRMRSADDNTLAEH). S545 carries the post-translational modification Phosphoserine. Disordered regions lie at residues 566-600 (KDTE…PPEI), 663-688 (SKSP…SWVP), and 722-743 (PHVN…KRSP). Residues 569–579 (EDPDDEGEGED) are compositionally biased toward acidic residues. Over residues 585–594 (PSSPEGGSPK) the composition is skewed to low complexity. S587 and S592 each carry phosphoserine. Residues 679–688 (PTERESSWVP) are compositionally biased toward basic and acidic residues. The helical transmembrane segment at 773–793 (LVMVPVALNSGVSLLVLVLCL) threads the bilayer. Residues 794 to 799 (SLAWFS) lie on the Extracellular side of the membrane.

As to expression, highly expressed in brain (at protein level).

Its subcellular location is the membrane. In terms of biological role, glycogen-targeting subunit for protein phosphatase 1 (PP1). The polypeptide is Protein phosphatase 1 regulatory subunit 3F (Ppp1r3f) (Mus musculus (Mouse)).